A 58-amino-acid chain; its full sequence is Small ribosomal subunit protein uS14 (58 aa).

Residues 1-21 (MSESETEQTGEHASHRTGQTH) are disordered. Over residues 9–21 (TGEHASHRTGQTH) the composition is skewed to basic and acidic residues. Positions 23, 26, 41, and 44 each coordinate Zn(2+).

This sequence belongs to the universal ribosomal protein uS14 family. Zinc-binding uS14 subfamily. In terms of assembly, part of the 30S ribosomal subunit. Zn(2+) serves as cofactor.

Its function is as follows. Binds 16S rRNA, required for the assembly of 30S particles. In Haloquadratum walsbyi (strain DSM 16790 / HBSQ001), this protein is Small ribosomal subunit protein uS14.